A 1312-amino-acid polypeptide reads, in one-letter code: Cyclic GMP-binding protein D (1312 aa).

The N-terminal Ras-GEF domain occupies 26-155 (GFSAIKSCSL…EFFKAKKMAR (130 aa)). 2 stretches are compositionally biased toward low complexity: residues 206 to 236 (NTMN…SSPN) and 275 to 296 (NGTS…LFNQ). Disordered regions lie at residues 206–244 (NTMN…RSSM) and 260–326 (NFNN…NNVN). Residues 297 to 310 (QPSLSMLNDDGSVQ) show a composition bias toward polar residues. The segment covering 311–326 (NNNNNNNNNNNNNNVN) has biased composition (low complexity). A Ras-GEF domain is found at 353–582 (LPEAIAKELT…FRLSKIREET (230 aa)). Residues 586 to 658 (QSLKESNGIG…NCGNGSGISS (73 aa)) are disordered. Over residues 591–612 (SNGIGNSNSTSGGSSSSLVNKD) the composition is skewed to low complexity. Residues 613–625 (GSGGGGGSGGGGS) are compositionally biased toward gly residues. A compositionally biased stretch (basic and acidic residues) spans 630–644 (GDGKGDGKDNRDGRG). Low complexity predominate over residues 646–657 (GNSNCGNGSGIS). An a nucleoside 3',5'-cyclic phosphate-binding site is contributed by 698 to 857 (VSSTLSEREW…ATFYKFIGVI (160 aa)). The GRAM domain maps to 940–1006 (SSFRTKFGLS…DKILTVDKNI (67 aa)). The span at 1059-1087 (QQQQPSQQPSQQQSQSSQLQQSVSASSTT) shows a compositional bias: low complexity. Disordered regions lie at residues 1059–1108 (QQQQ…IKDL) and 1167–1210 (NNIN…NSSI). Residues 1105–1218 (IKDL…SNTS) and 1182–1303 (NNNN…LACV) each bind a nucleoside 3',5'-cyclic phosphate.

Its function is as follows. Promotes the exchange of Ras-bound GDP by GTP. Induces the formation of substrate-attached pseudopodia, that leads to increased adhesion and thereby negatively influencing cell speed and polarity. The chain is Cyclic GMP-binding protein D (gbpD) from Dictyostelium discoideum (Social amoeba).